A 1343-amino-acid chain; its full sequence is Vascular endothelial growth factor receptor 2 (1343 aa).

A signal peptide spans 1-19 (MESRALLAVALWFCVETRA). Residues 20–760 (ASVGLPGDSL…EGVQEKTNLE (741 aa)) lie on the Extracellular side of the membrane. 5 N-linked (GlcNAc...) asparagine glycosylation sites follow: Asn-46, Asn-96, Asn-143, Asn-158, and Asn-245. Ig-like C2-type domains are found at residues 46–109 (NTTL…RDTD), 141–207 (NKNK…INDE), 224–320 (YDVV…KNKT), 328–414 (PFIA…HMVS), 421–540 (PQIG…RVIS), 547–654 (PEIT…LVKQ), and 663–749 (PMIT…TLFI). A disulfide bond links Cys-53 and Cys-103. Cysteines 150 and 200 form a disulfide. Residues Cys-246 and Cys-307 are joined by a disulfide bond. Residues Asn-318, Asn-374, Asn-395, Asn-507, Asn-576, Asn-609, Asn-615, Asn-627, Asn-671, Asn-700, and Asn-717 are each glycosylated (N-linked (GlcNAc...) asparagine). Cystine bridges form between Cys-445–Cys-526 and Cys-567–Cys-638. Cys-684 and Cys-733 are oxidised to a cystine. The chain crosses the membrane as a helical span at residues 761 to 781 (VIILVGTAVIAMFFWLLLVIL). The Cytoplasmic segment spans residues 782–1343 (VRTVKRANEG…SGTTLRSSPV (562 aa)). Residue Tyr-797 is modified to Phosphotyrosine. The Protein kinase domain maps to 830–1158 (LKLGKPLGRG…FSELVEHLGN (329 aa)). Residues 836 to 844 (LGRGAFGQV) and Lys-864 each bind ATP. Tyr-947 is subject to Phosphotyrosine; by autocatalysis. Phosphoserine is present on residues Ser-978 and Ser-980. Tyr-992 carries the phosphotyrosine; by autocatalysis modification. The cysteines at positions 1020 and 1041 are disulfide-linked. Asp-1024 serves as the catalytic Proton acceptor. Residues Tyr-1050, Tyr-1055, Tyr-1171, and Tyr-1210 each carry the phosphotyrosine; by autocatalysis modification. Ser-1227 and Ser-1231 each carry phosphoserine. Phosphothreonine is present on Thr-1234. The interval 1267–1314 (TLEDRNKLSPSFGGMMPSKSRESVASEGSNQTSGYQSGYHSDDTDTTV) is disordered. Residues 1292-1305 (SEGSNQTSGYQSGY) show a composition bias toward polar residues. 3 positions are modified to phosphotyrosine; by autocatalysis: Tyr-1301, Tyr-1305, and Tyr-1315.

Belongs to the protein kinase superfamily. Tyr protein kinase family. CSF-1/PDGF receptor subfamily. As to quaternary structure, homodimer in the presence of bound dimeric VEGFA, VEGFC or VEGFD ligands; monomeric in the absence of bound ligands. Can also form heterodimers with FLT1/VEGFR1 and KDR/VEGFR2. Interacts (tyrosine phosphorylated) with LFYN, NCK1, PLCG1. Interacts (tyrosine-phosphorylated active form preferentially) with DAB2IP (via C2 domain and active form preferentially); the interaction occurs at the late phase of VEGFA response and inhibits KDR/VEGFR2 activity. Interacts with SHBSH2D2A/TSAD, GRB2, MYOF, CBL and PDCD6. Interacts (via C-terminus domain) with ERN1 (via kinase domain); the interaction is facilitated in a XBP1- and vascular endothelial growth factor (VEGF)-dependent manner in endothelial cells. Interacts (via juxtamembrane region) with chaperone PDCL3 (via thioredoxin fold region); the interaction leads to increased KDR/VEGFR2 abundance through inhibition of its ubiquitination and degradation. Interacts (tyrosine phosphorylated) with CCDC88A/GIV (via SH2-like region); binding requires autophosphorylation of the KDR/VEGFR2 C-terminal region. Interacts with isoform 2 of BSG. Interacts with SLC31A1; this interaction is induced upon VEGFA stimulation leading to SLC31A1 and KDR subsequent co-internalization to early endosomes, thereby activating KDR downstream signaling in endothelial cells. In terms of processing, N-glycosylated. Post-translationally, ubiquitinated. Tyrosine phosphorylation of the receptor promotes its poly-ubiquitination, leading to its degradation via the proteasome or lysosomal proteases. Autophosphorylated on tyrosine residues upon ligand binding. Autophosphorylation occurs in trans, i.e. one subunit of the dimeric receptor phosphorylates tyrosine residues on the other subunit. Phosphorylation at Tyr-947 is important for interaction with SH2D2A/TSAD and VEGFA-mediated reorganization of the actin cytoskeleton. Phosphorylation at Tyr-1171 is important for interaction with PLCG1 and SHB. Phosphorylation at Tyr-1210 is important for interaction with NCK1 and FYN. Dephosphorylated by PTPRB. Dephosphorylated by PTPRJ at Tyr-797, Tyr-947, Tyr-992, Tyr-1050, Tyr-1055, Tyr-1171 and Tyr-1210. In terms of processing, the inhibitory disulfide bond between Cys-1020 and Cys-1041 may serve as a specific molecular switch for H(2)S-induced modification that regulates KDR/VEGFR2 function. Expressed in the post-pubertal mammary glands.

It is found in the cell membrane. It localises to the cytoplasm. The protein localises to the nucleus. Its subcellular location is the cytoplasmic vesicle. The protein resides in the early endosome. It is found in the cell junction. It localises to the endoplasmic reticulum. The catalysed reaction is L-tyrosyl-[protein] + ATP = O-phospho-L-tyrosyl-[protein] + ADP + H(+). Present in an inactive conformation in the absence of bound ligand. Binding of VEGFA, VEGFC or VEGFD leads to dimerization and activation by autophosphorylation on tyrosine residues. May be regulated by hydrogen sulfide (H(2)S) levels via a sensitive intracellular disulfide bond. In terms of biological role, tyrosine-protein kinase that acts as a cell-surface receptor for VEGFA, VEGFC and VEGFD. Plays an essential role in the regulation of angiogenesis, vascular development, vascular permeability, and embryonic hematopoiesis. Promotes proliferation, survival, migration and differentiation of endothelial cells. Promotes reorganization of the actin cytoskeleton. Isoforms lacking a transmembrane domain may function as decoy receptors for VEGFA, VEGFC and/or VEGFD. Modulates FLT1 and FLT4 signaling by forming heterodimers. Binding of vascular growth factors to isoform 1 leads to the activation of several signaling cascades. Activation of PLCG1 leads to the production of the cellular signaling molecules diacylglycerol and inositol-1,4,5-trisphosphate and the activation of protein kinase C. Mediates activation of MAPK1/ERK2, MAPK3/ERK1 and the MAP kinase signaling pathway, as well as of the AKT1 signaling pathway. Mediates phosphorylation of PIK3R1, the regulatory subunit of phosphatidylinositol 3-kinase, reorganization of the actin cytoskeleton and activation of PTK2/FAK1. Required for VEGFA-mediated induction of NOS2 and NOS3, leading to the production of the signaling molecule nitric oxide (NO) by endothelial cells. Phosphorylates PLCG1. Promotes phosphorylation of FYN, NCK1, NOS3, PIK3R1, PTK2/FAK1 and SRC. The chain is Vascular endothelial growth factor receptor 2 from Rattus norvegicus (Rat).